Reading from the N-terminus, the 303-residue chain is UDP-N-acetylenolpyruvoylglucosamine reductase (303 aa).

An FAD-binding PCMH-type domain is found at 28-195 (KTGGPAQYLA…ISATFGLEPG (168 aa)). Residue R174 is part of the active site. Residue S224 is the Proton donor of the active site. E294 is a catalytic residue.

The protein belongs to the MurB family. It depends on FAD as a cofactor.

The protein localises to the cytoplasm. It catalyses the reaction UDP-N-acetyl-alpha-D-muramate + NADP(+) = UDP-N-acetyl-3-O-(1-carboxyvinyl)-alpha-D-glucosamine + NADPH + H(+). It functions in the pathway cell wall biogenesis; peptidoglycan biosynthesis. Cell wall formation. This is UDP-N-acetylenolpyruvoylglucosamine reductase from Lactobacillus gasseri (strain ATCC 33323 / DSM 20243 / BCRC 14619 / CIP 102991 / JCM 1131 / KCTC 3163 / NCIMB 11718 / NCTC 13722 / AM63).